A 375-amino-acid polypeptide reads, in one-letter code: Succinyl-diaminopimelate desuccinylase (375 aa).

His-66 is a binding site for Zn(2+). Asp-68 is an active-site residue. Asp-99 contributes to the Zn(2+) binding site. Glu-133 functions as the Proton acceptor in the catalytic mechanism. 3 residues coordinate Zn(2+): Glu-134, Glu-162, and His-348.

Belongs to the peptidase M20A family. DapE subfamily. As to quaternary structure, homodimer. It depends on Zn(2+) as a cofactor. The cofactor is Co(2+).

The catalysed reaction is N-succinyl-(2S,6S)-2,6-diaminopimelate + H2O = (2S,6S)-2,6-diaminopimelate + succinate. It functions in the pathway amino-acid biosynthesis; L-lysine biosynthesis via DAP pathway; LL-2,6-diaminopimelate from (S)-tetrahydrodipicolinate (succinylase route): step 3/3. Functionally, catalyzes the hydrolysis of N-succinyl-L,L-diaminopimelic acid (SDAP), forming succinate and LL-2,6-diaminopimelate (DAP), an intermediate involved in the bacterial biosynthesis of lysine and meso-diaminopimelic acid, an essential component of bacterial cell walls. The chain is Succinyl-diaminopimelate desuccinylase from Stenotrophomonas maltophilia (strain K279a).